The chain runs to 193 residues: Ion-translocating oxidoreductase complex subunit A (193 aa).

6 consecutive transmembrane segments (helical) span residues 5 to 25, 39 to 59, 62 to 82, 102 to 122, 134 to 154, and 172 to 192; these read ALLL…FLGL, LGMG…SWML, WLLA…LVIA, SLGI…VALL, VLFG…FAGL, and AAFI…GLVA.

This sequence belongs to the NqrDE/RnfAE family. The complex is composed of six subunits: RnfA, RnfB, RnfC, RnfD, RnfE and RnfG.

It is found in the cell inner membrane. Functionally, part of a membrane-bound complex that couples electron transfer with translocation of ions across the membrane. This chain is Ion-translocating oxidoreductase complex subunit A, found in Aromatoleum aromaticum (strain DSM 19018 / LMG 30748 / EbN1) (Azoarcus sp. (strain EbN1)).